The following is a 261-amino-acid chain: Cytochrome c oxidase subunit 3 (261 aa).

The Mitochondrial matrix segment spans residues 1-15 (MTHQTHAYHMVNPSP). A helical transmembrane segment spans residues 16-34 (WPLTGALSALLMTSGLIMW). Topologically, residues 35 to 40 (FHYNSM) are mitochondrial intermembrane. Residues 41–66 (SLLTLGFTTNLLTMYQWWRDVIREGT) traverse the membrane as a helical segment. Over 67-72 (FQGHHT) the chain is Mitochondrial matrix. The chain crosses the membrane as a helical span at residues 73 to 105 (PIVQKGLRYGMVLFIVSEVFFFAGFFWAFYHSS). At 106–128 (LAPTPELGGCWPPTGIIPLNPLE) the chain is on the mitochondrial intermembrane side. A helical transmembrane segment spans residues 129-152 (VPLLNTSVLLASGVSITWAHHSLM). Over 153-155 (EGN) the chain is Mitochondrial matrix. Residues 156-183 (RKHMLQALFITISLGVYFTLLQASEYYE) traverse the membrane as a helical segment. Over 184–190 (TSFTISD) the chain is Mitochondrial intermembrane. The chain crosses the membrane as a helical span at residues 191-223 (GVYGSTFFMATGFHGLHVIIGSTFLIVCFLRQL). The Mitochondrial matrix segment spans residues 224 to 232 (YYHFTSNHH). The helical transmembrane segment at 233 to 256 (FGFEAAAWYWHFVDVVWLFLYVSI) threads the bilayer. The Mitochondrial intermembrane segment spans residues 257–261 (YWWGS).

The protein belongs to the cytochrome c oxidase subunit 3 family. In terms of assembly, component of the cytochrome c oxidase (complex IV, CIV), a multisubunit enzyme composed of 14 subunits. The complex is composed of a catalytic core of 3 subunits MT-CO1, MT-CO2 and MT-CO3, encoded in the mitochondrial DNA, and 11 supernumerary subunits COX4I, COX5A, COX5B, COX6A, COX6B, COX6C, COX7A, COX7B, COX7C, COX8 and NDUFA4, which are encoded in the nuclear genome. The complex exists as a monomer or a dimer and forms supercomplexes (SCs) in the inner mitochondrial membrane with NADH-ubiquinone oxidoreductase (complex I, CI) and ubiquinol-cytochrome c oxidoreductase (cytochrome b-c1 complex, complex III, CIII), resulting in different assemblies (supercomplex SCI(1)III(2)IV(1) and megacomplex MCI(2)III(2)IV(2)).

Its subcellular location is the mitochondrion inner membrane. It carries out the reaction 4 Fe(II)-[cytochrome c] + O2 + 8 H(+)(in) = 4 Fe(III)-[cytochrome c] + 2 H2O + 4 H(+)(out). Its function is as follows. Component of the cytochrome c oxidase, the last enzyme in the mitochondrial electron transport chain which drives oxidative phosphorylation. The respiratory chain contains 3 multisubunit complexes succinate dehydrogenase (complex II, CII), ubiquinol-cytochrome c oxidoreductase (cytochrome b-c1 complex, complex III, CIII) and cytochrome c oxidase (complex IV, CIV), that cooperate to transfer electrons derived from NADH and succinate to molecular oxygen, creating an electrochemical gradient over the inner membrane that drives transmembrane transport and the ATP synthase. Cytochrome c oxidase is the component of the respiratory chain that catalyzes the reduction of oxygen to water. Electrons originating from reduced cytochrome c in the intermembrane space (IMS) are transferred via the dinuclear copper A center (CU(A)) of subunit 2 and heme A of subunit 1 to the active site in subunit 1, a binuclear center (BNC) formed by heme A3 and copper B (CU(B)). The BNC reduces molecular oxygen to 2 water molecules using 4 electrons from cytochrome c in the IMS and 4 protons from the mitochondrial matrix. This chain is Cytochrome c oxidase subunit 3 (MT-CO3), found in Canis lupus (Gray wolf).